A 314-amino-acid chain; its full sequence is Olfactory receptor 1E1 (314 aa).

Over 1–25 (MMGQNQTSISDFLLLGLPIQPEQQN) the chain is Extracellular. Asparagine 5 carries an N-linked (GlcNAc...) asparagine glycan. A helical membrane pass occupies residues 26 to 49 (LCYALFLAMYLTTLLGNLLIIVLI). The Cytoplasmic portion of the chain corresponds to 50–57 (RLDSHLHT). Residues 58–79 (PMYLFLSNLSFSDLCFSSVTIP) traverse the membrane as a helical segment. The Extracellular segment spans residues 80-100 (KLLQNMQNQDPSIPYADCLTQ). An intrachain disulfide couples cysteine 97 to cysteine 189. The helical transmembrane segment at 101–120 (MYFFLLFGDLESFLLVAMAY) threads the bilayer. Over 121 to 139 (DRYVAICFALHYTAIMSPM) the chain is Cytoplasmic. The helical transmembrane segment at 140–158 (LCLSLVALSWVLTTFHAML) threads the bilayer. The Extracellular segment spans residues 159–195 (HTLLMARLCFCADNVIPHFFCDMSALLKLACSDTRVN). The helical transmembrane segment at 196-219 (EWVIFIMGGLIVVIPFLLILGSYA) threads the bilayer. Residues 220–236 (RIVSSILKVPSSKGICK) are Cytoplasmic-facing. A helical transmembrane segment spans residues 237–259 (AFSTCGSHLSVVSLFYGTVIGLY). Residues 260–272 (LCPSANSSTLKET) are Extracellular-facing. Residues 273 to 292 (VMAMMYTVVTPMLNPFIYSL) traverse the membrane as a helical segment. Residues 293-314 (RNGDMKGALSRVIHQKKTFFSL) are Cytoplasmic-facing.

The protein belongs to the G-protein coupled receptor 1 family.

It is found in the cell membrane. In terms of biological role, odorant receptor. The protein is Olfactory receptor 1E1 (OR1E1) of Gorilla gorilla gorilla (Western lowland gorilla).